A 182-amino-acid polypeptide reads, in one-letter code: Large ribosomal subunit protein uL10 (182 aa).

This sequence belongs to the universal ribosomal protein uL10 family. Part of the ribosomal stalk of the 50S ribosomal subunit. The N-terminus interacts with L11 and the large rRNA to form the base of the stalk. The C-terminus forms an elongated spine to which L12 dimers bind in a sequential fashion forming a multimeric L10(L12)X complex.

Forms part of the ribosomal stalk, playing a central role in the interaction of the ribosome with GTP-bound translation factors. The sequence is that of Large ribosomal subunit protein uL10 from Leptothrix cholodnii (strain ATCC 51168 / LMG 8142 / SP-6) (Leptothrix discophora (strain SP-6)).